Reading from the N-terminus, the 366-residue chain is Peroxisomal (S)-2-hydroxy-acid oxidase GLO4 (366 aa).

The region spanning 1–360 (MEDNLPVNVR…TRSHVMTEGD (360 aa)) is the FMN hydroxy acid dehydrogenase domain. Position 27 (tyrosine 27) interacts with a 2-oxocarboxylate. Residues 80–82 (PTG), serine 109, 130–132 (QLY), and threonine 158 contribute to the FMN site. Position 132 (tyrosine 132) interacts with a 2-oxocarboxylate. Arginine 167 is an a 2-oxocarboxylate binding site. Residues lysine 231 and serine 253 each contribute to the FMN site. Histidine 255 functions as the Proton acceptor in the catalytic mechanism. Arginine 258 is an a 2-oxocarboxylate binding site. FMN is bound by residues 286 to 290 (DGGIR) and 309 to 310 (XX). The Microbody targeting signal signature appears at 364-366 (SLL).

Belongs to the FMN-dependent alpha-hydroxy acid dehydrogenase family. In terms of assembly, homotetramer. The cofactor is FMN.

The protein localises to the peroxisome. The enzyme catalyses a (2S)-2-hydroxycarboxylate + O2 = a 2-oxocarboxylate + H2O2. It participates in lipid metabolism; fatty acid metabolism. Oxidase that catalyzes the oxidation of a broad range of 2-hydroxyacids to the corresponding 2-oxoacids, with a reduction of O2 to H2O2. May be involved in a general medium- and long-chain fatty acid catabolic pathway such as alpha-oxidation. This Oryza sativa subsp. indica (Rice) protein is Peroxisomal (S)-2-hydroxy-acid oxidase GLO4 (GLO4).